We begin with the raw amino-acid sequence, 147 residues long: Hemoglobin subunit gamma-2 (147 aa).

In terms of domain architecture, Globin spans 3–147 (HFTEEDKATI…VASALSSRYH (145 aa)). Thr13 carries the phosphothreonine modification. Phosphoserine is present on residues Ser45, Ser51, and Ser53. Lys60 is subject to N6-acetyllysine. Residue His64 coordinates heme b. N6-acetyllysine is present on Lys83. His93 is a heme b binding site. The residue at position 94 (Cys94) is an S-nitrosocysteine. A phosphoserine mark is found at Ser140, Ser143, and Ser144.

Belongs to the globin family. As to quaternary structure, heterotetramer of two alpha chains and two gamma chains in fetal hemoglobin (Hb F). In terms of tissue distribution, red blood cells.

In terms of biological role, gamma chains make up the fetal hemoglobin F, in combination with alpha chains. The chain is Hemoglobin subunit gamma-2 (HBG2) from Hylobates lar (Lar gibbon).